The primary structure comprises 98 residues: Signal peptidase complex subunit 1 (98 aa).

Residues 1 to 18 (MLDIQTHMDFAGQGKAER) lie on the Cytoplasmic side of the membrane. A helical membrane pass occupies residues 19 to 38 (WSRFIITFFGIVGLVYGAFV). Topologically, residues 39 to 42 (QQFS) are lumenal. A helical transmembrane segment spans residues 43–65 (QTVYILGAGFVLSSLITIPPWPL). At 66 to 98 (YRRNALKWQKPIDTDAKSSSSESGDEGKKKKKQ) the chain is on the cytoplasmic side. The disordered stretch occupies residues 78–98 (DTDAKSSSSESGDEGKKKKKQ). A phosphoserine mark is found at serine 84, serine 85, serine 86, and serine 88.

The protein belongs to the SPCS1 family. Component of the signal peptidase complex (SPC) composed of a catalytic subunit twr/SEC11 and three accessory subunits Spase12/SPCS1, Spase25/SPCS2 and Spase22-23/SPCS3. The complex induces a local thinning of the ER membrane which is used to measure the length of the signal peptide (SP) h-region of protein substrates. This ensures the selectivity of the complex towards h-regions shorter than 18-20 amino acids.

It is found in the endoplasmic reticulum membrane. In terms of biological role, component of the signal peptidase complex (SPC) which catalyzes the cleavage of N-terminal signal sequences from nascent proteins as they are translocated into the lumen of the endoplasmic reticulum. Dispensable for SPC enzymatic activity. Functionally, (Microbial infection) Plays an important role in infection by flaviviruses such as West Nile virus and Dengue virus type 2. The chain is Signal peptidase complex subunit 1 (Spase12) from Drosophila melanogaster (Fruit fly).